Here is a 185-residue protein sequence, read N- to C-terminus: Ribosome-recycling factor (185 aa).

This sequence belongs to the RRF family.

It is found in the cytoplasm. Its function is as follows. Responsible for the release of ribosomes from messenger RNA at the termination of protein biosynthesis. May increase the efficiency of translation by recycling ribosomes from one round of translation to another. In Aliivibrio salmonicida (strain LFI1238) (Vibrio salmonicida (strain LFI1238)), this protein is Ribosome-recycling factor.